Here is a 921-residue protein sequence, read N- to C-terminus: Isoleucine--tRNA ligase (921 aa).

The 'HIGH' region signature appears at proline 57–histidine 67. Glutamate 552 contacts L-isoleucyl-5'-AMP. Residues lysine 593–serine 597 carry the 'KMSKS' region motif. Residue lysine 596 coordinates ATP. 4 residues coordinate Zn(2+): cysteine 888, cysteine 891, cysteine 908, and cysteine 911.

Belongs to the class-I aminoacyl-tRNA synthetase family. IleS type 1 subfamily. In terms of assembly, monomer. Zn(2+) serves as cofactor.

The protein localises to the cytoplasm. The enzyme catalyses tRNA(Ile) + L-isoleucine + ATP = L-isoleucyl-tRNA(Ile) + AMP + diphosphate. Functionally, catalyzes the attachment of isoleucine to tRNA(Ile). As IleRS can inadvertently accommodate and process structurally similar amino acids such as valine, to avoid such errors it has two additional distinct tRNA(Ile)-dependent editing activities. One activity is designated as 'pretransfer' editing and involves the hydrolysis of activated Val-AMP. The other activity is designated 'posttransfer' editing and involves deacylation of mischarged Val-tRNA(Ile). This is Isoleucine--tRNA ligase from Listeria monocytogenes serovar 1/2a (strain ATCC BAA-679 / EGD-e).